We begin with the raw amino-acid sequence, 313 residues long: Beta-ketoacyl-[acyl-carrier-protein] synthase III (313 aa).

Catalysis depends on residues cysteine 112 and histidine 238. The segment at glutamine 239–arginine 243 is ACP-binding. Asparagine 268 is an active-site residue.

Belongs to the thiolase-like superfamily. FabH family. As to quaternary structure, homodimer.

Its subcellular location is the cytoplasm. The catalysed reaction is malonyl-[ACP] + acetyl-CoA + H(+) = 3-oxobutanoyl-[ACP] + CO2 + CoA. It participates in lipid metabolism; fatty acid biosynthesis. Catalyzes the condensation reaction of fatty acid synthesis by the addition to an acyl acceptor of two carbons from malonyl-ACP. Catalyzes the first condensation reaction which initiates fatty acid synthesis and may therefore play a role in governing the total rate of fatty acid production. Possesses both acetoacetyl-ACP synthase and acetyl transacylase activities. Its substrate specificity determines the biosynthesis of branched-chain and/or straight-chain of fatty acids. This chain is Beta-ketoacyl-[acyl-carrier-protein] synthase III, found in Staphylococcus saprophyticus subsp. saprophyticus (strain ATCC 15305 / DSM 20229 / NCIMB 8711 / NCTC 7292 / S-41).